The primary structure comprises 128 residues: Arginine decarboxylase proenzyme (128 aa).

Ser76 functions as the Schiff-base intermediate with substrate; via pyruvic acid in the catalytic mechanism. Position 76 is a pyruvic acid (Ser); by autocatalysis (Ser76). His81 functions as the Proton acceptor; for processing activity in the catalytic mechanism. Cys96 functions as the Proton donor; for catalytic activity in the catalytic mechanism.

It belongs to the prokaryotic AdoMetDC family. Type 1 subfamily. Heterooctamer of four alpha and four beta chains arranged as a tetramer of alpha/beta heterodimers. The cofactor is pyruvate. Is synthesized initially as an inactive proenzyme. Formation of the active enzyme involves a self-maturation process in which the active site pyruvoyl group is generated from an internal serine residue via an autocatalytic post-translational modification. Two non-identical subunits are generated from the proenzyme in this reaction, and the pyruvate is formed at the N-terminus of the alpha chain, which is derived from the carboxyl end of the proenzyme. The post-translation cleavage follows an unusual pathway, termed non-hydrolytic serinolysis, in which the side chain hydroxyl group of the serine supplies its oxygen atom to form the C-terminus of the beta chain, while the remainder of the serine residue undergoes an oxidative deamination to produce ammonia and the pyruvoyl group blocking the N-terminus of the alpha chain.

The catalysed reaction is L-arginine + H(+) = agmatine + CO2. Its pathway is amine and polyamine biosynthesis; agmatine biosynthesis; agmatine from L-arginine: step 1/1. Specifically catalyzes the decarboxylation of L-arginine to agmatine. Has no S-adenosylmethionine decarboxylase (AdoMetDC) activity. This is Arginine decarboxylase proenzyme from Sulfurisphaera tokodaii (strain DSM 16993 / JCM 10545 / NBRC 100140 / 7) (Sulfolobus tokodaii).